The chain runs to 143 residues: Ribonuclease H (143 aa).

An RNase H type-1 domain is found at M1–L141. Mg(2+)-binding residues include D9, E47, D69, and D133.

Belongs to the RNase H family. As to quaternary structure, monomer. Requires Mg(2+) as cofactor.

It is found in the cytoplasm. It carries out the reaction Endonucleolytic cleavage to 5'-phosphomonoester.. Its function is as follows. Endonuclease that specifically degrades the RNA of RNA-DNA hybrids. This Novosphingobium aromaticivorans (strain ATCC 700278 / DSM 12444 / CCUG 56034 / CIP 105152 / NBRC 16084 / F199) protein is Ribonuclease H.